Consider the following 338-residue polypeptide: Anthranilate phosphoribosyltransferase (338 aa).

5-phospho-alpha-D-ribose 1-diphosphate is bound by residues glycine 81, 84–85 (GD), threonine 89, 91–94 (NIST), 109–117 (KHGNRGVSS), and serine 121. Anthranilate is bound at residue glycine 81. Serine 93 provides a ligand contact to Mg(2+). Asparagine 112 provides a ligand contact to anthranilate. Residue arginine 167 participates in anthranilate binding. Mg(2+) is bound by residues aspartate 225 and glutamate 226.

Belongs to the anthranilate phosphoribosyltransferase family. As to quaternary structure, homodimer. Mg(2+) is required as a cofactor.

The catalysed reaction is N-(5-phospho-beta-D-ribosyl)anthranilate + diphosphate = 5-phospho-alpha-D-ribose 1-diphosphate + anthranilate. The protein operates within amino-acid biosynthesis; L-tryptophan biosynthesis; L-tryptophan from chorismate: step 2/5. In terms of biological role, catalyzes the transfer of the phosphoribosyl group of 5-phosphorylribose-1-pyrophosphate (PRPP) to anthranilate to yield N-(5'-phosphoribosyl)-anthranilate (PRA). The sequence is that of Anthranilate phosphoribosyltransferase from Methanoculleus marisnigri (strain ATCC 35101 / DSM 1498 / JR1).